The chain runs to 236 residues: Leucyl/phenylalanyl-tRNA--protein transferase (236 aa).

Belongs to the L/F-transferase family.

Its subcellular location is the cytoplasm. The enzyme catalyses N-terminal L-lysyl-[protein] + L-leucyl-tRNA(Leu) = N-terminal L-leucyl-L-lysyl-[protein] + tRNA(Leu) + H(+). The catalysed reaction is N-terminal L-arginyl-[protein] + L-leucyl-tRNA(Leu) = N-terminal L-leucyl-L-arginyl-[protein] + tRNA(Leu) + H(+). It catalyses the reaction L-phenylalanyl-tRNA(Phe) + an N-terminal L-alpha-aminoacyl-[protein] = an N-terminal L-phenylalanyl-L-alpha-aminoacyl-[protein] + tRNA(Phe). Functions in the N-end rule pathway of protein degradation where it conjugates Leu, Phe and, less efficiently, Met from aminoacyl-tRNAs to the N-termini of proteins containing an N-terminal arginine or lysine. This chain is Leucyl/phenylalanyl-tRNA--protein transferase, found in Yersinia enterocolitica serotype O:8 / biotype 1B (strain NCTC 13174 / 8081).